The following is a 504-amino-acid chain: MEEFQVYLELNRSRRHDFLYPLLFREYIYALAHDHGLNKSMIFLENQGYGNKFSSLIVKRLIIRMDQQNHLIISANDSNQNSFFGHNNNLYSQMISSGFAVIVEIPFSLRLVSYSQGEEVAKSHNLQSIHSIFPFLEDKFSHLNYVLDVLIPHPIHLEILVQALRYWVKDASSLHLLRFSLYEYCNLKSFITPKKSISILNTRLFFFLYNSHAREYESIFLFLRNQSSHLRSTSSGVFLERIYFYGKIEYLVEVFYNDFQNNLGLFKDPFIHFIRYQGKTILASKDTPLLMNKWKYYFVDLWQYYFYMWSQSGRVRINQLSKYSLDFLGYLSSVRLNPSVVRSQMLENSFIIDNAMKKLDTRIPIISLIGSLSKAKFCNTLGHPISKPTWADSSDSDIIDRFVRICRNLSHYHSGSSKKKSLYRIKYILRFSCVKTLARKHKSTVRAFLKRLGSEFLEEFFTETEDEHVFSLIFPRVFFTSRKLYRGRIWYLDIICINALVNHE.

The protein belongs to the intron maturase 2 family. MatK subfamily.

It is found in the plastid. Its subcellular location is the chloroplast. Functionally, usually encoded in the trnK tRNA gene intron. Probably assists in splicing its own and other chloroplast group II introns. The polypeptide is Maturase K (Bombax buonopozense (Red-flowered silk cotton tree)).